Here is a 342-residue protein sequence, read N- to C-terminus: S-adenosylmethionine:tRNA ribosyltransferase-isomerase (342 aa).

It belongs to the QueA family. In terms of assembly, monomer.

It localises to the cytoplasm. The enzyme catalyses 7-aminomethyl-7-carbaguanosine(34) in tRNA + S-adenosyl-L-methionine = epoxyqueuosine(34) in tRNA + adenine + L-methionine + 2 H(+). Its pathway is tRNA modification; tRNA-queuosine biosynthesis. Functionally, transfers and isomerizes the ribose moiety from AdoMet to the 7-aminomethyl group of 7-deazaguanine (preQ1-tRNA) to give epoxyqueuosine (oQ-tRNA). In Streptococcus pyogenes serotype M49 (strain NZ131), this protein is S-adenosylmethionine:tRNA ribosyltransferase-isomerase.